Consider the following 351-residue polypeptide: Cytochrome c biogenesis protein CcsA (351 aa).

8 consecutive transmembrane segments (helical) span residues 17–37, 38–58, 68–88, 97–117, 143–163, 259–279, 286–306, and 320–340; these read VLFL…LPAI, NALG…LLGA, LSNL…VHLI, LVGV…TLTL, MMLS…FLVI, IIGL…VWAN, WSWD…AAYL, and AILA…VNLL.

It belongs to the CcmF/CycK/Ccl1/NrfE/CcsA family. May interact with ccs1.

Its subcellular location is the cellular thylakoid membrane. Required during biogenesis of c-type cytochromes (cytochrome c6 and cytochrome f) at the step of heme attachment. The chain is Cytochrome c biogenesis protein CcsA from Trichormus variabilis (strain ATCC 29413 / PCC 7937) (Anabaena variabilis).